The following is a 290-amino-acid chain: UPF0761 membrane protein YihY (290 aa).

The next 6 helical transmembrane spans lie at 44-64 (LLSL…FPMF), 104-124 (VGAC…DSAL), 140-160 (FAVY…SLAI), 183-203 (VLPL…VPTT), 210-230 (AIVG…GFAL), and 244-264 (VLAV…IVLL).

The protein belongs to the UPF0761 family.

The protein resides in the cell inner membrane. The polypeptide is UPF0761 membrane protein YihY (Salmonella arizonae (strain ATCC BAA-731 / CDC346-86 / RSK2980)).